Here is a 207-residue protein sequence, read N- to C-terminus: Suppressor of IKBKE 1 (207 aa).

Coiled coils occupy residues 70-102 and 162-193; these read HILL…DALE and QFCK…SLQA.

It belongs to the SIKE family. As to quaternary structure, interacts with IKBKE and TBK1 via its coiled coil region. Interaction with TBK1 is disrupted upon viral infection or TLR3 stimulation. Interacts with CDC42BPB. Interacts with SIKE1 which mediates association with the STRIPAK core complex composed of PP2A catalytic and scaffolding subunits, the striatins (PP2A regulatory subunits), the striatin-associated proteins MOB4, STRIP1 and STRIP2, PDCD10 and members of the STE20 kinases, such as STK24 and STK26. As to expression, widely expressed. Expressed in brain, heart, skeletal muscle, colon, thymus, spleen, kidney, liver, small intestine, placenta, lung and leukocytes. Present in all cell lines tested (at protein level).

It is found in the cytoplasm. In terms of biological role, physiological suppressor of IKK-epsilon and TBK1 that plays an inhibitory role in virus- and TLR3-triggered IRF3. Inhibits TLR3-mediated activation of interferon-stimulated response elements (ISRE) and the IFN-beta promoter. May act by disrupting the interactions of IKBKE or TBK1 with TICAM1/TRIF, IRF3 and RIGI. Does not inhibit NF-kappa-B activation pathways. Associates with the striatin-interacting phosphatase and kinase (STRIPAK) core complex, forming the extended (SIKE1:SLMAP)STRIPAK complex. The (SIKE1:SLMAP)STRIPAK complex dephosphorylates STK3 leading to the inhibition of Hippo signaling and the control of cell growth. The chain is Suppressor of IKBKE 1 from Homo sapiens (Human).